We begin with the raw amino-acid sequence, 166 residues long: Crossover junction endodeoxyribonuclease RuvC (166 aa).

Residues D7, E67, and D140 contribute to the active site. D7, E67, and D140 together coordinate Mg(2+).

It belongs to the RuvC family. Homodimer which binds Holliday junction (HJ) DNA. The HJ becomes 2-fold symmetrical on binding to RuvC with unstacked arms; it has a different conformation from HJ DNA in complex with RuvA. In the full resolvosome a probable DNA-RuvA(4)-RuvB(12)-RuvC(2) complex forms which resolves the HJ. The cofactor is Mg(2+).

The protein resides in the cytoplasm. The enzyme catalyses Endonucleolytic cleavage at a junction such as a reciprocal single-stranded crossover between two homologous DNA duplexes (Holliday junction).. The RuvA-RuvB-RuvC complex processes Holliday junction (HJ) DNA during genetic recombination and DNA repair. Endonuclease that resolves HJ intermediates. Cleaves cruciform DNA by making single-stranded nicks across the HJ at symmetrical positions within the homologous arms, yielding a 5'-phosphate and a 3'-hydroxyl group; requires a central core of homology in the junction. The consensus cleavage sequence is 5'-(A/T)TT(C/G)-3'. Cleavage occurs on the 3'-side of the TT dinucleotide at the point of strand exchange. HJ branch migration catalyzed by RuvA-RuvB allows RuvC to scan DNA until it finds its consensus sequence, where it cleaves and resolves the cruciform DNA. This Brevibacillus brevis (strain 47 / JCM 6285 / NBRC 100599) protein is Crossover junction endodeoxyribonuclease RuvC.